The following is a 58-amino-acid chain: Large ribosomal subunit protein bL32 (58 aa).

The segment at 1–23 is disordered; it reads MAVPARHTSSAKKNRRRTHYKLT. A compositionally biased stretch (basic residues) spans 9–20; it reads SSAKKNRRRTHY.

It belongs to the bacterial ribosomal protein bL32 family.

This chain is Large ribosomal subunit protein bL32 (rpmF), found in Lactococcus lactis subsp. cremoris (Streptococcus cremoris).